The primary structure comprises 360 residues: Alpha-ketoglutarate dependent kainoid synthase (360 aa).

The 111-residue stretch at 200 to 310 folds into the Fe2OG dioxygenase domain; that stretch reads MFFSNRIYPE…RASLISFYEP (111 aa). 3 residues coordinate Fe cation: histidine 225, aspartate 227, and histidine 286. Residue arginine 301 coordinates 2-oxoglutarate.

It belongs to the iron/ascorbate-dependent oxidoreductase family. The cofactor is Fe(2+).

It carries out the reaction prekainate + 2-oxoglutarate + O2 = kainate + succinate + CO2 + H2O. The catalysed reaction is prekainate + 2-oxoglutarate + O2 + H(+) = kainate lactone + succinate + CO2 + H2O. It functions in the pathway secondary metabolite biosynthesis. Its activity is regulated as follows. Inhibited by the iron chelator EDTA. Iron/ascorbate-dependent oxidoreductase: part of the gene cluster that mediates the biosynthesis of kainic acid (KA) and derivatives, natural products with neurochemical activity acting as ionotropic glutamate receptor (iGluR) agonists, thus being neurotoxins. Catalyzes the conversion of prekainic acid to kainic acid and kainic acid lactone. The protein is Alpha-ketoglutarate dependent kainoid synthase of Digenea simplex (Marine red alga).